The primary structure comprises 255 residues: 3-oxo-5-alpha-steroid 4-dehydrogenase 1 (255 aa).

5 helical membrane passes run 6–26 (LCLL…AFVG), 82–102 (VLLA…PVLI), 107–127 (PTLL…GYLQ), 142–162 (VTHP…VINI), and 205–225 (FALA…LCAL).

It belongs to the steroid 5-alpha reductase family.

The protein resides in the microsome membrane. It is found in the endoplasmic reticulum membrane. The catalysed reaction is a 3-oxo-5alpha-steroid + NADP(+) = a 3-oxo-Delta(4)-steroid + NADPH + H(+). It carries out the reaction 5alpha-pregnane-3,20-dione + NADP(+) = progesterone + NADPH + H(+). It catalyses the reaction 17beta-hydroxy-5alpha-androstan-3-one + NADP(+) = testosterone + NADPH + H(+). The enzyme catalyses androst-4-ene-3,17-dione + NADPH + H(+) = 5alpha-androstan-3,17-dione + NADP(+). In terms of biological role, converts testosterone into 5-alpha-dihydrotestosterone and progesterone or corticosterone into their corresponding 5-alpha-3-oxosteroids. It plays a central role in sexual differentiation and androgen physiology. This is 3-oxo-5-alpha-steroid 4-dehydrogenase 1 from Mus musculus (Mouse).